The chain runs to 323 residues: Elongation factor P--(R)-beta-lysine ligase (323 aa).

74 to 76 (SPE) lines the substrate pocket. ATP contacts are provided by residues 98–100 (RNE) and N107. Y116 contacts substrate. 242 to 243 (EL) contributes to the ATP binding site. E249 serves as a coordination point for substrate. G298 provides a ligand contact to ATP.

Belongs to the class-II aminoacyl-tRNA synthetase family. EpmA subfamily. Homodimer.

The catalysed reaction is D-beta-lysine + L-lysyl-[protein] + ATP = N(6)-((3R)-3,6-diaminohexanoyl)-L-lysyl-[protein] + AMP + diphosphate + H(+). Its function is as follows. With EpmB is involved in the beta-lysylation step of the post-translational modification of translation elongation factor P (EF-P). Catalyzes the ATP-dependent activation of (R)-beta-lysine produced by EpmB, forming a lysyl-adenylate, from which the beta-lysyl moiety is then transferred to the epsilon-amino group of a conserved specific lysine residue in EF-P. In Vibrio campbellii (strain ATCC BAA-1116), this protein is Elongation factor P--(R)-beta-lysine ligase.